A 546-amino-acid chain; its full sequence is Chaperonin GroEL (546 aa).

Residues 29 to 32 (TLGP), Lys50, 86 to 90 (DGTTT), Gly414, 477 to 479 (NAA), and Asp493 contribute to the ATP site.

The protein belongs to the chaperonin (HSP60) family. Forms a cylinder of 14 subunits composed of two heptameric rings stacked back-to-back. Interacts with the co-chaperonin GroES.

Its subcellular location is the cytoplasm. It carries out the reaction ATP + H2O + a folded polypeptide = ADP + phosphate + an unfolded polypeptide.. Its function is as follows. Together with its co-chaperonin GroES, plays an essential role in assisting protein folding. The GroEL-GroES system forms a nano-cage that allows encapsulation of the non-native substrate proteins and provides a physical environment optimized to promote and accelerate protein folding. The sequence is that of Chaperonin GroEL from Geobacter metallireducens (strain ATCC 53774 / DSM 7210 / GS-15).